We begin with the raw amino-acid sequence, 105 residues long: Thioredoxin (105 aa).

The Thioredoxin domain occupies Ala1–Gln105. Cysteines 29 and 32 form a disulfide.

In terms of biological role, participates in various redox reactions through the reversible oxidation of its active center dithiol to a disulfide and catalyzes dithiol-disulfide exchange reactions. The polypeptide is Thioredoxin (trxA) (Alicyclobacillus acidocaldarius subsp. acidocaldarius (Bacillus acidocaldarius)).